We begin with the raw amino-acid sequence, 375 residues long: Chaperone protein DnaJ (375 aa).

The 65-residue stretch at 4-68 folds into the J domain; the sequence is DYYETLGVDR…ETRARYDQFG (65 aa). The CR-type zinc finger occupies 134–216; the sequence is GGEKEIRIPH…CGGAGRKQET (83 aa). Zn(2+) contacts are provided by Cys-147, Cys-150, Cys-164, Cys-167, Cys-190, Cys-193, Cys-204, and Cys-207. CXXCXGXG motif repeat units lie at residues 147-154, 164-171, 190-197, and 204-211; these read CQVCNGSG, CSTCNGAG, CPDCNGAG, and CDACGGAG.

The protein belongs to the DnaJ family. As to quaternary structure, homodimer. Requires Zn(2+) as cofactor.

Its subcellular location is the cytoplasm. In terms of biological role, participates actively in the response to hyperosmotic and heat shock by preventing the aggregation of stress-denatured proteins and by disaggregating proteins, also in an autonomous, DnaK-independent fashion. Unfolded proteins bind initially to DnaJ; upon interaction with the DnaJ-bound protein, DnaK hydrolyzes its bound ATP, resulting in the formation of a stable complex. GrpE releases ADP from DnaK; ATP binding to DnaK triggers the release of the substrate protein, thus completing the reaction cycle. Several rounds of ATP-dependent interactions between DnaJ, DnaK and GrpE are required for fully efficient folding. Also involved, together with DnaK and GrpE, in the DNA replication of plasmids through activation of initiation proteins. The chain is Chaperone protein DnaJ from Rippkaea orientalis (strain PCC 8801 / RF-1) (Cyanothece sp. (strain PCC 8801)).